Reading from the N-terminus, the 172-residue chain is Protein CapG (172 aa).

It belongs to the transferase hexapeptide repeat family.

It functions in the pathway capsule biogenesis; capsule polysaccharide biosynthesis. Required for the biosynthesis of type 1 capsular polysaccharide. This is Protein CapG (capG) from Staphylococcus aureus.